A 394-amino-acid polypeptide reads, in one-letter code: Peroxisomal membrane protein PEX25 (394 aa).

Polar residues predominate over residues M1 to D25. The segment at M1–A65 is disordered. The Cytoplasmic portion of the chain corresponds to M1 to Y366. Basic and acidic residues predominate over residues S51 to A65. Phosphoserine is present on residues S58, S63, and S289. A helical membrane pass occupies residues A367–I383. Over T384 to D394 the chain is Lumenal.

As to quaternary structure, homooligomer. Interacts with PEX27 and PEX34.

The protein resides in the peroxisome membrane. Required for regulation of peroxisome size and maintenance. Has a role in the import of peroxisomal matrix proteins. Imports RHO1 into the peroxisome. Also promotes peroxisome division and biogenesis. The chain is Peroxisomal membrane protein PEX25 (PEX25) from Saccharomyces cerevisiae (strain ATCC 204508 / S288c) (Baker's yeast).